A 356-amino-acid polypeptide reads, in one-letter code: Ubiquitin-conjugating enzyme E2 variant 3 (356 aa).

Residues 1 to 83 (MSDQPGTSRP…LEDLHNYHRE (83 aa)) are disordered. A compositionally biased stretch (polar residues) spans 18 to 32 (PTKTATRRRARPIAI). A compositionally biased stretch (basic and acidic residues) spans 63–76 (QPRKTVPKNVPLED). The UBC core domain maps to 169-324 (DIITEFMNRS…AREFVMKMAG (156 aa)).

The protein belongs to the ubiquitin-conjugating enzyme family. In terms of assembly, may interact with pmk-3. Expressed ubiquitously.

It is found in the nucleus. It localises to the cytoplasm. Its subcellular location is the cell projection. The protein localises to the dendrite. The protein resides in the axon. It is found in the cilium. Possible negative regulator of polyubiquitination. May modulate the activity of the p38 MAP kinase pnk-3. May have a role in axon termination and synaptic transmission at motor and mechanosensory neurons. Plays a role in intraflagellar transport in cilia and cilium length regulation. In Caenorhabditis elegans, this protein is Ubiquitin-conjugating enzyme E2 variant 3.